Reading from the N-terminus, the 584-residue chain is MNSKIKKDLKDIISKTIKELALRESIKLEEINIIMQKPPKSELGDLSILIFEFSKILKLNTSIITEEIIKQIGDKYATKAMGPYLNIKFNRKEYIKDTIKKVNEQKEKYGINNVLKNKRIIIEFSSPNTNKPLHIGHLRNDIIGESLSRILKASGAQVTKINLINDRGTHICKSMLAYKKFGNNTTPELSLKKGDHLIGDFYVKYNEYAKNNEMAEDEIQQLLCKWEEGDEKTVQLWKKLNQWAIEGIKATYKLTNITFDKIYLESEIFKIGREIILKGLEEGLCYKREDGAICIDIPTEKNEISEQQFKQKVLLRANGTSIYLTQDLGNIVTRKNEFDFDEMIYVVGSEQIHHFKTLFYVANKLGITKENNLVHLSYGMVNLPEGKMKSREGNVIDADNLIHDLSESIILEIKKRNSDKKDYQEIALNISLGAIHYYLLKTAIHKDILFNKEESLSFTGNSGPYIQYVGARINSILEKYDELNLSNETINFDLLVNENEWEIIKIISEFEEHIIKASKDRNPSVIANYSYLLAKSFSTYYQDTKIIDKNKPELTHARIDLSKAVLQTIKNCMHLLNIPYMKKM.

The 'HIGH' region motif lies at 127–137; the sequence is PNTNKPLHIGH.

It belongs to the class-I aminoacyl-tRNA synthetase family. Monomer.

Its subcellular location is the cytoplasm. The catalysed reaction is tRNA(Arg) + L-arginine + ATP = L-arginyl-tRNA(Arg) + AMP + diphosphate. The chain is Arginine--tRNA ligase from Borrelia hermsii (strain HS1 / DAH).